The chain runs to 966 residues: Leucine--tRNA ligase (966 aa).

A 'HIGH' region motif is present at residues 71–82 (PYPSGAGLHVGH). The segment at 561–580 (YSPRTFDPDDADTKPETPLS) is disordered. Residues 571–580 (ADTKPETPLS) are compositionally biased toward basic and acidic residues. The short motif at 734-738 (KMGKS) is the 'KMSKS' region element. Lys737 provides a ligand contact to ATP.

Belongs to the class-I aminoacyl-tRNA synthetase family.

It is found in the cytoplasm. It carries out the reaction tRNA(Leu) + L-leucine + ATP = L-leucyl-tRNA(Leu) + AMP + diphosphate. In Streptomyces coelicolor (strain ATCC BAA-471 / A3(2) / M145), this protein is Leucine--tRNA ligase.